The chain runs to 225 residues: Type II restriction enzyme BslI subunit alpha (225 aa).

2 C4-type zinc fingers span residues 36 to 53 (CKDCGQYWHTSLSECYFC) and 63 to 84 (CNSCGKKYSLTSSSKSCDTDGC).

As to quaternary structure, heterotetramer of two alpha and two beta subunits. The alpha subunit is believed to be responsible for DNA recognition, while the beta subunit is thought to mediate cleavage. Zn(2+) serves as cofactor.

The enzyme catalyses Endonucleolytic cleavage of DNA to give specific double-stranded fragments with terminal 5'-phosphates.. In terms of biological role, a P subtype restriction enzyme that recognizes the double-stranded sequence 5'-CCN(7)GG-3' and cleaves after N-7. This chain is Type II restriction enzyme BslI subunit alpha, found in Bacillus sp. (strain NEB-606).